The sequence spans 213 residues: Ribosomal RNA small subunit methyltransferase G (213 aa).

S-adenosyl-L-methionine contacts are provided by residues Gly72, Phe77, Ile125–Glu126, and Arg141.

It belongs to the methyltransferase superfamily. RNA methyltransferase RsmG family.

It localises to the cytoplasm. It carries out the reaction guanosine(527) in 16S rRNA + S-adenosyl-L-methionine = N(7)-methylguanosine(527) in 16S rRNA + S-adenosyl-L-homocysteine. In terms of biological role, specifically methylates the N7 position of guanine in position 527 of 16S rRNA. This Rhizobium meliloti (strain 1021) (Ensifer meliloti) protein is Ribosomal RNA small subunit methyltransferase G.